A 345-amino-acid polypeptide reads, in one-letter code: Phosphoribosylformylglycinamidine cyclo-ligase (345 aa).

Belongs to the AIR synthase family.

The protein resides in the cytoplasm. The enzyme catalyses 2-formamido-N(1)-(5-O-phospho-beta-D-ribosyl)acetamidine + ATP = 5-amino-1-(5-phospho-beta-D-ribosyl)imidazole + ADP + phosphate + H(+). Its pathway is purine metabolism; IMP biosynthesis via de novo pathway; 5-amino-1-(5-phospho-D-ribosyl)imidazole from N(2)-formyl-N(1)-(5-phospho-D-ribosyl)glycinamide: step 2/2. This Shewanella baltica (strain OS185) protein is Phosphoribosylformylglycinamidine cyclo-ligase.